The following is a 740-amino-acid chain: MPSNMFIQADKKKRLSLDVIGQLEDDLEADPLDYNKWNKLIQQVLAKDKEEQVKSVFNKYLNIFNFDQWCNYINYQLNRGEFQEVEQLFSKCLPITDHVELCRLYVSYVRRTNDVITGGEKARGIVVQAFEFAVTKVGIDISSGDLWNDYLDFLKAWTPAATWEQQQKTDLIRRVYKRFLVIPTEKIEQVWSTYTKWENEVNASSANKFIAEKSSEFMDARSWNTEWHNATERSLRREVIPIGIHNDNNNLVHTQLQLWYKWIALERENKLNLKDDSSVQQRIEYVYKQAIMALPFVPELWFKFNKFWLRSNEEANSNKCIELLNEALVLNPRSYLLTFQLSEMYEKDNTINKATETYDNLITFLTNDYNNINNQIESITNRELNNKKQEENTGEENNNENDDSDNDDNDDDDSFKNPTFQLSEEDALLLSKLQEKKDELNKAITLVYTKLMMACKRSRGIKEARGVFKQARNNFEAIGYEFYVENALMEYHSDNLKTASKIFELGMKHFKKQGEFLLAYLDFLIMINKGESIKVLFEQGLTALLQDVNIENENSNGDITSGANMRLQESKSKENIKKKNCIKKLIKKFSRYQSVYGDLDLIKSLDSRYEEYFPDDDSIELFSDRYRGHSIDVIKHFDLGKEDTSHEEIDTTAQETKRRKIQNPTVDEFTPEVSNNNNQHTNNKDAVQNQQQPQNFVGNTIYNLLRVLPNSSYFGPPSDHLFNNTKLVELFGNLPNVPTE.

6 HAT repeats span residues 48–78, 80–114, 121–156, 167–200, 236–268, and 278–310; these read DKEE…YQLN, GEFQ…RTND, KARG…FLKA, QKTD…WENE, RREV…LERE, and SVQQ…FWLR. A disordered region spans residues 381–418; sequence NRELNNKKQEENTGEENNNENDDSDNDDNDDDDSFKNP. Positions 392–413 are enriched in acidic residues; the sequence is NTGEENNNENDDSDNDDNDDDD. Residues 494–526 form an HAT 7 repeat; it reads DNLKTASKIFELGMKHFKKQGEFLLAYLDFLIM. Residues 668-688 form a disordered region; sequence EFTPEVSNNNNQHTNNKDAVQ. Polar residues predominate over residues 672–688; the sequence is EVSNNNNQHTNNKDAVQ.

It localises to the nucleus. Its subcellular location is the cytoplasm. Functionally, component of the cleavage factor IA (CFIA) complex, which is involved in the endonucleolytic cleavage during polyadenylation-dependent pre-mRNA 3'-end formation. The polypeptide is mRNA 3'-end-processing protein RNA14 (RNA14) (Debaryomyces hansenii (strain ATCC 36239 / CBS 767 / BCRC 21394 / JCM 1990 / NBRC 0083 / IGC 2968) (Yeast)).